The sequence spans 155 residues: Small ribosomal subunit protein uS7c (155 aa).

It belongs to the universal ribosomal protein uS7 family. In terms of assembly, part of the 30S ribosomal subunit.

The protein resides in the plastid. It is found in the chloroplast. One of the primary rRNA binding proteins, it binds directly to 16S rRNA where it nucleates assembly of the head domain of the 30S subunit. This Spathiphyllum wallisii (Peace lily) protein is Small ribosomal subunit protein uS7c (rps7).